We begin with the raw amino-acid sequence, 179 residues long: Large ribosomal subunit protein uL5 (179 aa).

The protein belongs to the universal ribosomal protein uL5 family. In terms of assembly, part of the 50S ribosomal subunit; part of the 5S rRNA/L5/L18/L25 subcomplex. Contacts the 5S rRNA and the P site tRNA. Forms a bridge to the 30S subunit in the 70S ribosome.

Functionally, this is one of the proteins that bind and probably mediate the attachment of the 5S RNA into the large ribosomal subunit, where it forms part of the central protuberance. In the 70S ribosome it contacts protein S13 of the 30S subunit (bridge B1b), connecting the 2 subunits; this bridge is implicated in subunit movement. Contacts the P site tRNA; the 5S rRNA and some of its associated proteins might help stabilize positioning of ribosome-bound tRNAs. This chain is Large ribosomal subunit protein uL5, found in Listeria innocua serovar 6a (strain ATCC BAA-680 / CLIP 11262).